The following is a 212-amino-acid chain: uncharacterized protein (212 aa).

Gly-53, Glu-74, and Asp-97 together coordinate S-adenosyl-L-methionine.

This sequence belongs to the methyltransferase superfamily. YrrT family.

In terms of biological role, could be a S-adenosyl-L-methionine-dependent methyltransferase. This is an uncharacterized protein from Bacillus mycoides (strain KBAB4) (Bacillus weihenstephanensis).